Consider the following 253-residue polypeptide: Ribosomal RNA small subunit methyltransferase J (253 aa).

Residues 101–102 (RD), 117–118 (ER), and D169 each bind S-adenosyl-L-methionine.

Belongs to the methyltransferase superfamily. RsmJ family.

The protein localises to the cytoplasm. It catalyses the reaction guanosine(1516) in 16S rRNA + S-adenosyl-L-methionine = N(2)-methylguanosine(1516) in 16S rRNA + S-adenosyl-L-homocysteine + H(+). Specifically methylates the guanosine in position 1516 of 16S rRNA. The sequence is that of Ribosomal RNA small subunit methyltransferase J from Psychromonas ingrahamii (strain DSM 17664 / CCUG 51855 / 37).